Consider the following 221-residue polypeptide: Cytidylate kinase (221 aa).

ATP is bound at residue 7-15 (GPSASGKSS).

This sequence belongs to the cytidylate kinase family. Type 1 subfamily.

The protein resides in the cytoplasm. It catalyses the reaction CMP + ATP = CDP + ADP. The enzyme catalyses dCMP + ATP = dCDP + ADP. The sequence is that of Cytidylate kinase from Borreliella burgdorferi (strain ZS7) (Borrelia burgdorferi).